The following is a 300-amino-acid chain: O-methyltransferase phiE (300 aa).

S-adenosyl-L-methionine is bound by residues Asp-130–Leu-131 and Asp-157–Val-158.

It belongs to the class I-like SAM-binding methyltransferase superfamily. Homodimer.

The enzyme catalyses phomoidride A + S-adenosyl-L-methionine = (-)-phomoidride B + methanol + S-adenosyl-L-homocysteine + H(+). It participates in secondary metabolite biosynthesis. In terms of biological role, O-methyltransferase; part of the gene cluster that mediates the biosynthesis of the antihypercholesterolemic agents phomoidrides which are dimeric anhydrides. Within the pathway, phiE catalyzes the acetalization reaction that converts phomoidride A to phomoidride B. The pathway begins with the highly reducing polyketide synthase phiA that catalyzes the formation of a C12-fatty acyl-ACP, starting from one acetate and 5 malonate units. The hydrolase phiM is involved in the release of the C12-fatty acyl chain from phiA. The alkylcitrate synthase (ACS) phiJ and the alkylcitrate dehydratase (ACDH) phiI then give rise to decarboxylated monomeric anhydrides by coupling the C12-fatty acyl chain with oxalacetic acid. The cyclase phiC is responsible for the dimerization of the monomeric anhydrides which leads to the production of prephomoidride that contains the characteristic bicyclo[4.3.1]deca-1,6-diene system of phomoidrides. Iterative oxidation catalyzed by the alpha-ketoglutarate-dependent dioxygenase phiK produced then phomoidride A. Finally, the methyltransferase phiE converts phomoidride A to phomoidride B via an acetalization reaction. The phosphatidylethanolamine-binding protein phiB and phiN are not essential for dimerization and their functions have still to be determined. In Fungal sp. (strain ATCC 74256), this protein is O-methyltransferase phiE.